The chain runs to 329 residues: Glycerol-3-phosphate dehydrogenase [NAD(P)+] (329 aa).

NADPH is bound by residues Trp11 and Lys101. Sn-glycerol 3-phosphate contacts are provided by Lys101, Gly132, and Ser134. Ala136 lines the NADPH pocket. Sn-glycerol 3-phosphate is bound by residues Lys188, Asp241, Ser251, Arg252, and Asn253. The Proton acceptor role is filled by Lys188. Position 252 (Arg252) interacts with NADPH. Residue Glu278 coordinates NADPH.

The protein belongs to the NAD-dependent glycerol-3-phosphate dehydrogenase family.

Its subcellular location is the cytoplasm. It carries out the reaction sn-glycerol 3-phosphate + NAD(+) = dihydroxyacetone phosphate + NADH + H(+). It catalyses the reaction sn-glycerol 3-phosphate + NADP(+) = dihydroxyacetone phosphate + NADPH + H(+). It participates in membrane lipid metabolism; glycerophospholipid metabolism. Functionally, catalyzes the reduction of the glycolytic intermediate dihydroxyacetone phosphate (DHAP) to sn-glycerol 3-phosphate (G3P), the key precursor for phospholipid synthesis. The polypeptide is Glycerol-3-phosphate dehydrogenase [NAD(P)+] (Onion yellows phytoplasma (strain OY-M)).